Reading from the N-terminus, the 122-residue chain is Large ribosomal subunit protein uL14c (122 aa).

The protein belongs to the universal ribosomal protein uL14 family. As to quaternary structure, part of the 50S ribosomal subunit.

It localises to the plastid. Its subcellular location is the chloroplast. In terms of biological role, binds to 23S rRNA. The protein is Large ribosomal subunit protein uL14c of Stigeoclonium helveticum (Green alga).